Here is a 479-residue protein sequence, read N- to C-terminus: Serine carboxypeptidase-like 29 (479 aa).

The N-terminal stretch at 1 to 28 (MAKTRGSCCLVNALIAIAFLATAHLCEA) is a signal peptide. N-linked (GlcNAc...) asparagine glycans are attached at residues Asn47 and Asn144. Intrachain disulfides connect Cys93–Cys349, Cys254–Cys266, and Cys290–Cys317. Ser186 is an active-site residue. An N-linked (GlcNAc...) asparagine glycan is attached at Asn293. Catalysis depends on residues Asp386 and His438.

It belongs to the peptidase S10 family. In terms of tissue distribution, expressed in seedlings, roots, leaves and flowers.

Its subcellular location is the secreted. Functionally, probable carboxypeptidase. In Arabidopsis thaliana (Mouse-ear cress), this protein is Serine carboxypeptidase-like 29 (SCPL29).